Here is a 60-residue protein sequence, read N- to C-terminus: Large ribosomal subunit protein bL33 (60 aa).

It belongs to the bacterial ribosomal protein bL33 family.

The protein is Large ribosomal subunit protein bL33 of Chlorobium phaeovibrioides (strain DSM 265 / 1930) (Prosthecochloris vibrioformis (strain DSM 265)).